The chain runs to 369 residues: Pyrimidine monooxygenase RutA (369 aa).

Residues 49–50, Asn115, Glu124, 140–141, and Ser190 contribute to the FMN site; these read IK and RY.

It belongs to the NtaA/SnaA/DszA monooxygenase family. RutA subfamily.

It carries out the reaction uracil + FMNH2 + NADH + O2 = (Z)-3-ureidoacrylate + FMN + NAD(+) + H2O + H(+). The enzyme catalyses thymine + FMNH2 + NADH + O2 = (Z)-2-methylureidoacrylate + FMN + NAD(+) + H2O + H(+). Its function is as follows. Catalyzes the pyrimidine ring opening between N-3 and C-4 by an unusual flavin hydroperoxide-catalyzed mechanism, adding oxygen atoms in the process to yield ureidoacrylate peracid, that immediately reacts with FMN forming ureidoacrylate and FMN-N(5)-oxide. The FMN-N(5)-oxide reacts spontaneously with NADH to produce FMN. Requires the flavin reductase RutF to regenerate FMN in vivo. This chain is Pyrimidine monooxygenase RutA, found in Acinetobacter baylyi (strain ATCC 33305 / BD413 / ADP1).